Reading from the N-terminus, the 187-residue chain is UPF0301 protein Sala_0165 (187 aa).

This sequence belongs to the UPF0301 (AlgH) family.

The protein is UPF0301 protein Sala_0165 of Sphingopyxis alaskensis (strain DSM 13593 / LMG 18877 / RB2256) (Sphingomonas alaskensis).